Here is a 455-residue protein sequence, read N- to C-terminus: Serine--tRNA ligase (455 aa).

252 to 254 (TAE) contributes to the L-serine binding site. Residues 283–285 (RKE) and valine 299 contribute to the ATP site. Residue glutamate 306 participates in L-serine binding. 370-373 (EVVS) serves as a coordination point for ATP. Position 406 (threonine 406) interacts with L-serine.

Belongs to the class-II aminoacyl-tRNA synthetase family. Type-1 seryl-tRNA synthetase subfamily. Homodimer. The tRNA molecule binds across the dimer.

The protein resides in the cytoplasm. The catalysed reaction is tRNA(Ser) + L-serine + ATP = L-seryl-tRNA(Ser) + AMP + diphosphate + H(+). It catalyses the reaction tRNA(Sec) + L-serine + ATP = L-seryl-tRNA(Sec) + AMP + diphosphate + H(+). Its pathway is aminoacyl-tRNA biosynthesis; selenocysteinyl-tRNA(Sec) biosynthesis; L-seryl-tRNA(Sec) from L-serine and tRNA(Sec): step 1/1. Its function is as follows. Catalyzes the attachment of serine to tRNA(Ser). Is also able to aminoacylate tRNA(Sec) with serine, to form the misacylated tRNA L-seryl-tRNA(Sec), which will be further converted into selenocysteinyl-tRNA(Sec). This is Serine--tRNA ligase from Pyrococcus horikoshii (strain ATCC 700860 / DSM 12428 / JCM 9974 / NBRC 100139 / OT-3).